Here is a 640-residue protein sequence, read N- to C-terminus: Telomere repeat-binding protein 4 (640 aa).

The 80-residue stretch at 343 to 422 (VKFSIKSLRI…LGNLGFTLEP (80 aa)) folds into the Ubiquitin-like domain. The segment at 442-464 (TDSTKLSERSAASPALETGIPLP) is disordered. Residues 530–589 (SQRRTRRPFSVTEVEALVSAVEEVGTGRWRDVKLRSFENASHRTYVDLKDKWKTLVHTAS) form the HTH myb-type domain. The H-T-H motif DNA-binding region spans 558 to 585 (WRDVKLRSFENASHRTYVDLKDKWKTLV).

In terms of assembly, homomultimer. Interacts with SNL1 (via PAH2). Interacts with STO. Expressed ubiquitously. Highest expression in flowers and roots.

Its subcellular location is the nucleus. Its function is as follows. Binds specifically to the plant telomeric double-stranded DNA sequences 5'-TTTAGGG-3'. At least 2 repeats of telomeric sequences are required for binding. Induces DNA bending. This is Telomere repeat-binding protein 4 (TRP4) from Arabidopsis thaliana (Mouse-ear cress).